Consider the following 166-residue polypeptide: Small ribosomal subunit protein uS5 (166 aa).

The region spanning Y12 to V75 is the S5 DRBM domain.

It belongs to the universal ribosomal protein uS5 family. In terms of assembly, part of the 30S ribosomal subunit. Contacts proteins S4 and S8.

Functionally, with S4 and S12 plays an important role in translational accuracy. Its function is as follows. Located at the back of the 30S subunit body where it stabilizes the conformation of the head with respect to the body. This Pseudomonas fluorescens (strain ATCC BAA-477 / NRRL B-23932 / Pf-5) protein is Small ribosomal subunit protein uS5.